Reading from the N-terminus, the 260-residue chain is Sphinganine C4-monooxygenase 1 (260 aa).

Transmembrane regions (helical) follow at residues 11–31, 55–75, and 92–112; these read LLGT…YVAL, SVVK…ILLF, and FLVL…WQYF. In terms of domain architecture, Fatty acid hydroxylase spans 99–235; sequence FVTAMIVLDT…FVMWDRILGT (137 aa). The Histidine box-1 signature appears at 114-118; sequence HRYMH. Residues 128-132 carry the Histidine box-2 motif; the sequence is HSQHH. The short motif at 207–213 is the Histidine box-3 element; sequence YHDIHHQ.

Belongs to the sterol desaturase family. Requires Fe cation as cofactor. As to expression, ubiquitous, with higher levels in flowers and roots.

The protein resides in the endoplasmic reticulum membrane. It catalyses the reaction a dihydroceramide + 2 Fe(II)-[cytochrome b5] + O2 + 2 H(+) = a phytoceramide + 2 Fe(III)-[cytochrome b5] + H2O. The protein operates within membrane lipid metabolism; sphingolipid biosynthesis. Involved in sphingolipid trihydroxy long-chain base (4-hydroxysphinganine) biosynthesis. Can use C18- and C20-sphinganine as substrates to produce C18- and C20-phytosphinganines (D-ribo-2-amino-1,3,4-trihydroxyoctadecane and -eicosane). In Arabidopsis thaliana (Mouse-ear cress), this protein is Sphinganine C4-monooxygenase 1 (SBH1).